Here is a 206-residue protein sequence, read N- to C-terminus: Small ribosomal subunit protein uS4 (206 aa).

Residues 96 to 156 form the S4 RNA-binding domain; the sequence is GRLDNVVYRM…EKSKKQARIK (61 aa).

This sequence belongs to the universal ribosomal protein uS4 family. As to quaternary structure, part of the 30S ribosomal subunit. Contacts protein S5. The interaction surface between S4 and S5 is involved in control of translational fidelity.

Its function is as follows. One of the primary rRNA binding proteins, it binds directly to 16S rRNA where it nucleates assembly of the body of the 30S subunit. With S5 and S12 plays an important role in translational accuracy. The sequence is that of Small ribosomal subunit protein uS4 from Actinobacillus succinogenes (strain ATCC 55618 / DSM 22257 / CCUG 43843 / 130Z).